A 531-amino-acid polypeptide reads, in one-letter code: Cytosolic Fe-S cluster assembly factor NAR1 (531 aa).

C20, C72, C75, C78, C184, and C239 together coordinate [4Fe-4S] cluster. A disordered region spans residues 395–426 (TSSTTTTKTNPLVARRKARLSSKRSESGAQDV). [4Fe-4S] cluster-binding residues include C442 and C446.

The protein belongs to the NARF family.

In terms of biological role, component of the cytosolic Fe/S protein assembly machinery. Required for maturation of extramitochondrial Fe/S proteins. May play a role in the transfer of pre-assembled Fe/S clusters to target apoproteins. In Meyerozyma guilliermondii (strain ATCC 6260 / CBS 566 / DSM 6381 / JCM 1539 / NBRC 10279 / NRRL Y-324) (Yeast), this protein is Cytosolic Fe-S cluster assembly factor NAR1 (NAR1).